The primary structure comprises 298 residues: Nucleotide-binding protein Dred_3054 (298 aa).

20–27 (GMSGAGKT) contributes to the ATP binding site. A GTP-binding site is contributed by 71-74 (DIRG).

It belongs to the RapZ-like family.

Its function is as follows. Displays ATPase and GTPase activities. This Desulforamulus reducens (strain ATCC BAA-1160 / DSM 100696 / MI-1) (Desulfotomaculum reducens) protein is Nucleotide-binding protein Dred_3054.